A 937-amino-acid chain; its full sequence is Proprotein convertase subtilisin/kexin type 6 (937 aa).

The segment covering 1–16 has biased composition (pro residues); it reads MPPRAPPAPGPRPPPR. The tract at residues 1-22 is disordered; it reads MPPRAPPAPGPRPPPRAAGRHG. A signal peptide spans 1 to 45; that stretch reads MPPRAPPAPGPRPPPRAAGRHGLSPLAPRPWRWLLLLALPAVCSA. The propeptide occupies 46–132; that stretch reads LPPPRPVYTN…QQEVKRRVKR (87 aa). Residues 149–468 enclose the Peptidase S8 domain; that stretch reads MWYMHCADKN…FGLVDAEALV (320 aa). Catalysis depends on charge relay system residues Asp-186 and His-227. Asn-240 carries an N-linked (GlcNAc...) asparagine glycan. Ser-401 functions as the Charge relay system in the catalytic mechanism. In terms of domain architecture, P/Homo B spans 476–616; the sequence is AVPSQHMCVA…SLILYGTAEH (141 aa). Residues 534–536 carry the Cell attachment site motif; that stretch reads RGD. The interval 621-656 is disordered; that stretch reads FSSHQSRSRMLELSVPEQEPLKAEGPPPQAETPEEE. FU repeat units lie at residues 660-707, 711-758, 762-806, 810-855, and 863-911; these read TGVC…GYFG, ARRC…GLYA, QRLC…GTYF, LIRC…GFYP, and HKVC…ETFC. Residues 680–898 are CRM (Cys-rich motif); the sequence is CLNCVHFSLG…GFTQLGTSCI (219 aa). N-linked (GlcNAc...) asparagine glycosylation is found at Asn-882 and Asn-900. The PLAC domain maps to 899-937; it reads TNHTCSNADETFCEMVKSNRLCERKLFIQFCCRTCLLAG.

This sequence belongs to the peptidase S8 family. In terms of assembly, the precursor protein seems to exist in the reticulum endoplasmic as both a monomer and a dimer-sized complex whereas mature form exists only as a monomer, suggesting that propeptide cleavage affects its tertiary or quaternary structure. Interacts (immature form including the propeptide) with RCN3; probably involved in the maturation and the secretion of PCSK6. Ca(2+) serves as cofactor. As to expression, high expression in the anterior pituitary and in several brain regions, the atrium, and the ventricle.

Serine endoprotease that processes various proproteins by cleavage at paired basic amino acids, recognizing the RXXX[KR]R consensus motif. Likely functions in the constitutive secretory pathway, with unique restricted distribution in both neuroendocrine and non-neuroendocrine tissues. This Rattus norvegicus (Rat) protein is Proprotein convertase subtilisin/kexin type 6 (Pcsk6).